Consider the following 465-residue polypeptide: 5'-adenylylsulfate reductase 1, chloroplastic (465 aa).

The N-terminal 53 residues, 1–53 (MAMSVNVSSSSSSGIINSRFGVSLEPKVSQIGSLRLLDRVHVAPVSLNLSGKR), are a transit peptide targeting the chloroplast. The tract at residues 73–327 (LAATMVAEIA…KAKECGLHKG (255 aa)) is reductase domain. The Thioredoxin domain occupies 344 to 465 (SAVADIFKSE…SLTSFLNLVR (122 aa)). Catalysis depends on nucleophile residues Cys385 and Cys388. A disulfide bridge connects residues Cys385 and Cys388.

The protein belongs to the APS reductase family. It depends on [4Fe-4S] cluster as a cofactor. As to expression, leaves, roots and stem.

Its subcellular location is the plastid. It localises to the chloroplast. The catalysed reaction is glutathione disulfide + sulfite + AMP + 2 H(+) = adenosine 5'-phosphosulfate + 2 glutathione. Stimulated by sodium sulfate &gt; ammonium sulfate and is sensitive to inactivation by 5'AMP. Functionally, reduces sulfate for Cys biosynthesis. Substrate preference is adenosine-5'-phosphosulfate (APS) &gt;&gt; 3'-phosphoadenosine-5'-phosphosulfate (PAPS). Uses glutathione or DTT as source of protons. The protein is 5'-adenylylsulfate reductase 1, chloroplastic (APR1) of Arabidopsis thaliana (Mouse-ear cress).